The following is a 236-amino-acid chain: MICOS complex subunit MIC25 (236 aa).

Residues 1–11 show a composition bias toward basic and acidic residues; it reads MGSAESREGRR. Positions 1-22 are disordered; that stretch reads MGSAESREGRRASFGMDEEERV. Gly-2 carries the N-myristoyl glycine lipid modification. Residues Ser-13 and Ser-31 each carry the phosphoserine modification. 2 disordered regions span residues 34–86 and 109–132; these read VVNR…VQVD and EREA…DQEK. Residues 48–58 are compositionally biased toward low complexity; it reads GLLAPPAAALG. Composition is skewed to basic and acidic residues over residues 62 to 71 and 122 to 132; these read GREKDSKPPR and RRGEGGVDQEK. The stretch at 127–167 forms a coiled coil; it reads GVDQEKQRLAQRARELESQEEELRCRDAFYKEQLGRLERQN. One can recognise a CHCH domain in the interval 195–236; the sequence is EPVCSGLQAQILRCYRDRLQEVLLCADLVRAYQHCVSSAHKG. 2 consecutive short sequence motifs (cx9C motif) follow at residues 198 to 208 and 219 to 229; these read CSGLQAQILRC and CADLVRAYQHC. Disulfide bonds link Cys-198–Cys-229 and Cys-208–Cys-219.

Belongs to the MICOS complex subunit Mic19 family. Metazoan Mic25 subfamily. In terms of assembly, component of the mitochondrial contact site and cristae organizing system (MICOS) complex, composed of at least MICOS10/MIC10, CHCHD3/MIC19, CHCHD6/MIC25, APOOL/MIC27, IMMT/MIC60, APOO/MIC23/MIC26 and MICOS13/MIC13. This complex was also known under the names MINOS or MitOS complex. The MICOS complex associates with mitochondrial outer membrane proteins SAMM50, MTX1 and MTX2 (together described as components of the mitochondrial outer membrane sorting assembly machinery (SAM) complex) and DNAJC11, mitochondrial inner membrane protein TMEM11 and with HSPA9. The MICOS and SAM complexes together with DNAJC11 are part of a large protein complex spanning both membranes termed the mitochondrial intermembrane space bridging (MIB) complex. Interacts with DISC1. Interacts with IMMT/MIC60.

The protein localises to the mitochondrion inner membrane. The protein resides in the mitochondrion. Its function is as follows. Component of the MICOS complex, a large protein complex of the mitochondrial inner membrane that plays crucial roles in the maintenance of crista junctions, inner membrane architecture, and formation of contact sites to the outer membrane. The sequence is that of MICOS complex subunit MIC25 (CHCHD6) from Bos taurus (Bovine).